The following is a 343-amino-acid chain: Ubiquitin thioesterase OTU1 (343 aa).

The interval 45 to 123 (RCKAKGGTHL…IVEEDQTRPK (79 aa)) is UBX-like. One can recognise an OTU domain in the interval 144–269 (LTRTAVPADN…GIHYDPLQRN (126 aa)). Residues 149 to 155 (VPADNSC) are cys-loop. Residue D152 is part of the active site. C155 serves as the catalytic Nucleophile. Residues 208-218 (IRRDDTWGGAI) form a variable-loop region. The segment at 258 to 262 (YDGIH) is his-loop. I261 provides a ligand contact to substrate. H262 is an active-site residue. The S2 site stretch occupies residues 286–291 (DIVLVQ). A C2H2-type zinc finger spans residues 313–337 (LRCMICQKGLTGQAEARDHARETGH). Residue H337 is part of the active site.

In terms of assembly, interacts with VCP; the interaction is direct. Interacts with FAF2/UBXD8. Interacts with DERL1; however interaction is dependent on the UBAX-like region, suggesting that it may be indirect. Interacts with PLAA, UBXN6 and VCP; may form a complex involved in macroautophagy.

It localises to the cytoplasm. The enzyme catalyses Thiol-dependent hydrolysis of ester, thioester, amide, peptide and isopeptide bonds formed by the C-terminal Gly of ubiquitin (a 76-residue protein attached to proteins as an intracellular targeting signal).. Its function is as follows. Hydrolase that can remove conjugated ubiquitin from proteins and participates in endoplasmic reticulum-associated degradation (ERAD) for misfolded lumenal proteins. May act by triming the ubiquitin chain on the associated substrate to facilitate their threading through the VCP/p97 pore. Ubiquitin moieties on substrates may present a steric impediment to the threading process when the substrate is transferred to the VCP pore and threaded through VCP's axial channel. Mediates deubiquitination of 'Lys-27'-, 'Lys-29'- and 'Lys-33'-linked polyubiquitin chains. Also able to hydrolyze 'Lys-11'-linked ubiquitin chains. Cleaves both polyubiquitin and di-ubiquitin. May play a role in macroautophagy, regulating for instance the clearance of damaged lysosomes. May recruit PLAA, UBXN6 and VCP to damaged lysosome membranes decorated with K48-linked ubiquitin chains and remove these chains allowing autophagosome formation. This Mus musculus (Mouse) protein is Ubiquitin thioesterase OTU1 (Yod1).